The chain runs to 266 residues: Probable metal transport system membrane protein TP_0036 (266 aa).

Transmembrane regions (helical) follow at residues 10–30 (AFVA…HLVL), 34–54 (ALMG…AVSC), 56–76 (IHPG…IEFL), 88–108 (LSIV…SGLI), 120–140 (ILVV…FCVG), 172–192 (VASV…GILV), 211–231 (FLLT…LGLV), and 238–258 (VAPG…VIAL).

It belongs to the ABC-3 integral membrane protein family.

The protein resides in the cell inner membrane. Part of an ATP-driven transport system TP_0034/TP_0035/TP_0036 for a metal. The chain is Probable metal transport system membrane protein TP_0036 from Treponema pallidum (strain Nichols).